A 270-amino-acid chain; its full sequence is Nodule lectin (270 aa).

A signal peptide spans 1–33 (MAFYRTNLPTRELFSLVSVVIVLLATNINSVQA). The propeptide occupies 34–41 (LSFNFTKL). N-linked (GlcNAc...) asparagine glycosylation is present at asparagine 134.

This sequence belongs to the leguminous lectin family. Post-translationally, glycosylated in a boron-dependent manner. Glycosylation is required for localization to symbiosomes. 3 different glycosylation variants, NLEC-1A, NLEC-1B and NLEC-1C, have been identified. In terms of tissue distribution, expressed in nodules of Rhizobium-infected and uninfected roots and in the root stele near the nodule attachment point. In roots which have been colonized by the endomycorrhizal fungus G.versiforme, detected only in cortical cells colonized by the fungus, mainly those containing arbuscules.

Its subcellular location is the symbiosome. It localises to the peribacteroid space. The protein resides in the peribacteroid membrane. Its function is as follows. Involved in symbiosome development. The chain is Nodule lectin (NLEC1) from Pisum sativum (Garden pea).